We begin with the raw amino-acid sequence, 478 residues long: Glucose-6-phosphate 1-dehydrogenase (478 aa).

Residues Arg-48, 86–87 (DF), and Lys-142 each bind NADP(+). Substrate contacts are provided by His-172, Lys-176, Glu-210, and Asp-229. The active-site Proton acceptor is His-234. Positions 334 and 339 each coordinate substrate.

It belongs to the glucose-6-phosphate dehydrogenase family.

The enzyme catalyses D-glucose 6-phosphate + NADP(+) = 6-phospho-D-glucono-1,5-lactone + NADPH + H(+). Its pathway is carbohydrate degradation; pentose phosphate pathway; D-ribulose 5-phosphate from D-glucose 6-phosphate (oxidative stage): step 1/3. Functionally, catalyzes the oxidation of glucose 6-phosphate to 6-phosphogluconolactone. The sequence is that of Glucose-6-phosphate 1-dehydrogenase from Borreliella burgdorferi (strain ATCC 35210 / DSM 4680 / CIP 102532 / B31) (Borrelia burgdorferi).